The sequence spans 291 residues: MIGIREIRSKMKSINNTKKITKAMEMVSISKLRKIKKRMCSSRPYFNIINQVISHVITGNLEHYHTYFNQRNVKRIGVIIVSTDRGLCGNLNTLLFKKVLEVLTEHINEHILNNLFVIGTKALTFFKSFTNNIVFSLSNLKNDFKIIDLMEMIRISLEMYISGKIDKLFLAYNKFNSTIIQTPTLVQLLPILKPKLGKKEVKKTWDYIYESNSKVLLNVVLNRYIEFQIYQSILENLVCEQASRMLAMKQATDNSADLLKALQMNYNKVRQSSITQELTEIISGAAAVSLN.

The protein belongs to the ATPase gamma chain family. In terms of assembly, F-type ATPases have 2 components, CF(1) - the catalytic core - and CF(0) - the membrane proton channel. CF(1) has five subunits: alpha(3), beta(3), gamma(1), delta(1), epsilon(1). CF(0) has three main subunits: a, b and c.

The protein resides in the cell membrane. In terms of biological role, produces ATP from ADP in the presence of a proton gradient across the membrane. The gamma chain is believed to be important in regulating ATPase activity and the flow of protons through the CF(0) complex. The sequence is that of ATP synthase gamma chain from Buchnera aphidicola subsp. Baizongia pistaciae (strain Bp).